Reading from the N-terminus, the 413-residue chain is Peptidase T (413 aa).

Histidine 82 is a binding site for Zn(2+). Aspartate 84 is a catalytic residue. Position 145 (aspartate 145) interacts with Zn(2+). The Proton acceptor role is filled by glutamate 179. Zn(2+) is bound by residues glutamate 180, aspartate 202, and histidine 384.

The protein belongs to the peptidase M20B family. Zn(2+) is required as a cofactor.

The protein localises to the cytoplasm. The catalysed reaction is Release of the N-terminal residue from a tripeptide.. Its function is as follows. Cleaves the N-terminal amino acid of tripeptides. The polypeptide is Peptidase T (Latilactobacillus sakei subsp. sakei (strain 23K) (Lactobacillus sakei subsp. sakei)).